A 436-amino-acid chain; its full sequence is Histidinol dehydrogenase (436 aa).

Residues tyrosine 136, glutamine 198, and asparagine 221 each contribute to the NAD(+) site. Substrate is bound by residues serine 244, glutamine 266, and histidine 269. Residues glutamine 266 and histidine 269 each contribute to the Zn(2+) site. Catalysis depends on proton acceptor residues glutamate 334 and histidine 335. Residues histidine 335, aspartate 368, glutamate 422, and histidine 427 each coordinate substrate. A Zn(2+)-binding site is contributed by aspartate 368. Residue histidine 427 coordinates Zn(2+).

This sequence belongs to the histidinol dehydrogenase family. Requires Zn(2+) as cofactor.

The enzyme catalyses L-histidinol + 2 NAD(+) + H2O = L-histidine + 2 NADH + 3 H(+). It functions in the pathway amino-acid biosynthesis; L-histidine biosynthesis; L-histidine from 5-phospho-alpha-D-ribose 1-diphosphate: step 9/9. In terms of biological role, catalyzes the sequential NAD-dependent oxidations of L-histidinol to L-histidinaldehyde and then to L-histidine. This is Histidinol dehydrogenase from Dehalococcoides mccartyi (strain CBDB1).